An 860-amino-acid chain; its full sequence is DNA mismatch repair protein MutS (860 aa).

620–627 (GPNMGGKS) contacts ATP.

This sequence belongs to the DNA mismatch repair MutS family.

Functionally, this protein is involved in the repair of mismatches in DNA. It is possible that it carries out the mismatch recognition step. This protein has a weak ATPase activity. This Dechloromonas aromatica (strain RCB) protein is DNA mismatch repair protein MutS.